A 433-amino-acid polypeptide reads, in one-letter code: MTKIVSIVGRPNVGKSTLFNRIIGYKKSIVNSKSGITRDRNYGFCNWNGIEFCLIDTGGYTNESKNIFDKKICEQFLFALAESDVILFLVDPSNDILGIDYDISKRIRKLKKSIYLVINKIDIYKNIYNTYKYCKFGITKTYCISSINGTGTEKLLDSIVSNFDKNIKIYKKNIPRIAIVGRPNVGKSTLINTLLNKNKNIVTNISGTTRDSIDVLYSKFGIECILVDTAGIRKKKNIKEDIEFYSVMRAIKSIQNSDVSLLIIDSKSGFESQDINIFKIIENNNKGIVLLINKWDIFNNNYLINSYENKIKKIIAPFNDVPIFFTSSFTKKDIIKSIKTAVKITFNLRLRIKTSLLNKIILPILNKNPHPSINGKLITIKYCSQIQTYNPQFIFFTNYPNNIKESYKRFIENNIREKFNFTGIPIKILFRLK.

EngA-type G domains lie at 3-167 (KIVS…DKNI) and 175-349 (PRIA…FNLR). GTP contacts are provided by residues 9 to 16 (GRPNVGKS), 56 to 60 (DTGGY), 119 to 122 (NKID), 181 to 188 (GRPNVGKS), 228 to 232 (DTAGI), and 293 to 296 (NKWD). The 84-residue stretch at 350-433 (LRIKTSLLNK…IPIKILFRLK (84 aa)) folds into the KH-like domain.

This sequence belongs to the TRAFAC class TrmE-Era-EngA-EngB-Septin-like GTPase superfamily. EngA (Der) GTPase family. As to quaternary structure, associates with the 50S ribosomal subunit.

Functionally, GTPase that plays an essential role in the late steps of ribosome biogenesis. The sequence is that of GTPase Der from Karelsulcia muelleri (strain GWSS) (Sulcia muelleri).